Here is a 512-residue protein sequence, read N- to C-terminus: 2,3-bisphosphoglycerate-independent phosphoglycerate mutase (512 aa).

Mn(2+) contacts are provided by D12 and S62. S62 serves as the catalytic Phosphoserine intermediate. Substrate contacts are provided by residues H123, 153 to 154, R185, R191, 260 to 263, and K333; these read RD and RPDR. Residues D400, H404, D441, H442, and H460 each contribute to the Mn(2+) site.

This sequence belongs to the BPG-independent phosphoglycerate mutase family. In terms of assembly, monomer. Mn(2+) serves as cofactor.

It catalyses the reaction (2R)-2-phosphoglycerate = (2R)-3-phosphoglycerate. It functions in the pathway carbohydrate degradation; glycolysis; pyruvate from D-glyceraldehyde 3-phosphate: step 3/5. Its function is as follows. Catalyzes the interconversion of 2-phosphoglycerate and 3-phosphoglycerate. The sequence is that of 2,3-bisphosphoglycerate-independent phosphoglycerate mutase from Clostridium perfringens (strain ATCC 13124 / DSM 756 / JCM 1290 / NCIMB 6125 / NCTC 8237 / Type A).